The sequence spans 507 residues: ATP synthase subunit alpha (507 aa).

Residue 169–176 (GDRQTGKT) coordinates ATP.

It belongs to the ATPase alpha/beta chains family. F-type ATPases have 2 components, CF(1) - the catalytic core - and CF(0) - the membrane proton channel. CF(1) has five subunits: alpha(3), beta(3), gamma(1), delta(1), epsilon(1). CF(0) has three main subunits: a(1), b(2) and c(9-12). The alpha and beta chains form an alternating ring which encloses part of the gamma chain. CF(1) is attached to CF(0) by a central stalk formed by the gamma and epsilon chains, while a peripheral stalk is formed by the delta and b chains. In this bacterium the a and b subunits are transcribed but do not seem to be translated, thus the ATP synthase consists of the alpha, beta, gamma, delta, epsilon and c subunits.

Its subcellular location is the cell membrane. The enzyme catalyses ATP + H2O + 4 H(+)(in) = ADP + phosphate + 5 H(+)(out). Its function is as follows. Produces ATP from ADP in the presence of a proton gradient across the membrane. The alpha chain is a regulatory subunit. This is ATP synthase subunit alpha from Moorella thermoacetica (strain ATCC 39073 / JCM 9320).